Here is a 131-residue protein sequence, read N- to C-terminus: Agouti-signaling protein (131 aa).

Positions 1–22 (MDVTRLLLATLVGFLCFFTVHS) are cleaved as a signal peptide. The N-linked (GlcNAc...) asparagine glycan is linked to Asn39. The disordered stretch occupies residues 58 to 100 (KSKKISRKEAEKRKRSSKKKASMKKVARPPPPSPCVATRDSCK). Residues 70–84 (RKRSSKKKASMKKVA) show a composition bias toward basic residues. Intrachain disulfides connect Cys92–Cys107, Cys99–Cys113, Cys106–Cys124, Cys110–Cys131, and Cys115–Cys122. Residues 92–131 (CVATRDSCKPPAPACCDPCASCQCRFFGSACTCRVLNPNC) enclose the Agouti domain.

Epithelial cells of the hair follicles and the epidermis.

The protein localises to the secreted. Its function is as follows. Involved in the regulation of melanogenesis. The binding of ASP to MC1R precludes alpha-MSH initiated signaling and thus blocks production of cAMP, leading to a down-regulation of eumelanogenesis (brown/black pigment) and thus increasing synthesis of pheomelanin (yellow/red pigment). Causes hair follicle melanocytes to synthesize phaeomelanin instead of black or brown pigment eumelanin and produces hairs with a subapical yellow band on an otherwise black or brown background when expressed during the mid-portion of hair growth. The sequence is that of Agouti-signaling protein (Asip) from Mus musculus (Mouse).